The chain runs to 190 residues: MNPASIIFLAFAMSTDAFAAAVGKGSAMLKPRLLEALRIGLIFGVIEAITPVVGWFIGQAATQWVANWDHWIAFSLLLLLGLHMIYNGTRQQAEAEEEKPRQHGFWLLAVTGLATSIDALAVGVGLAFVNVNIWVAASAIGLATMTMVTLGVMLGRAIGTVMGQRAEVLGGVVLIIVGSRILYEHLSAVA.

6 helical membrane-spanning segments follow: residues 3 to 23, 39 to 59, 65 to 85, 106 to 128, 133 to 155, and 157 to 177; these read PASI…AAVG, IGLI…FIGQ, VANW…LHMI, WLLA…GLAF, IWVA…VMLG, and AIGT…LIIV.

It belongs to the MntP (TC 9.B.29) family.

The protein resides in the cell inner membrane. Its function is as follows. Probably functions as a manganese efflux pump. The protein is Putative manganese efflux pump MntP of Pseudomonas fluorescens (strain ATCC BAA-477 / NRRL B-23932 / Pf-5).